A 376-amino-acid polypeptide reads, in one-letter code: Succinyl-diaminopimelate desuccinylase (376 aa).

His-66 is a Zn(2+) binding site. Asp-68 is a catalytic residue. Residue Asp-99 coordinates Zn(2+). Glu-133 (proton acceptor) is an active-site residue. Glu-134, Glu-162, and His-349 together coordinate Zn(2+).

It belongs to the peptidase M20A family. DapE subfamily. As to quaternary structure, homodimer. It depends on Zn(2+) as a cofactor. Co(2+) is required as a cofactor.

It carries out the reaction N-succinyl-(2S,6S)-2,6-diaminopimelate + H2O = (2S,6S)-2,6-diaminopimelate + succinate. Its pathway is amino-acid biosynthesis; L-lysine biosynthesis via DAP pathway; LL-2,6-diaminopimelate from (S)-tetrahydrodipicolinate (succinylase route): step 3/3. Functionally, catalyzes the hydrolysis of N-succinyl-L,L-diaminopimelic acid (SDAP), forming succinate and LL-2,6-diaminopimelate (DAP), an intermediate involved in the bacterial biosynthesis of lysine and meso-diaminopimelic acid, an essential component of bacterial cell walls. This is Succinyl-diaminopimelate desuccinylase from Buchnera aphidicola subsp. Cinara cedri (strain Cc).